Consider the following 433-residue polypeptide: Adenylosuccinate synthetase (433 aa).

Residues 11-17 and 39-41 contribute to the GTP site; these read GDEGKGK and GHT. Asp12 (proton acceptor) is an active-site residue. Residues Asp12 and Gly39 each coordinate Mg(2+). IMP-binding positions include 12-15, 37-40, Thr134, Arg148, Asn230, Thr245, and Arg309; these read DEGK and NAGH. His40 (proton donor) is an active-site residue. 305 to 311 contributes to the substrate binding site; the sequence is VTTGRKR. Residues Arg311, 337-339, and 419-421 each bind GTP; these read KLD and GTG.

It belongs to the adenylosuccinate synthetase family. In terms of assembly, homodimer. Mg(2+) is required as a cofactor.

It localises to the cytoplasm. It catalyses the reaction IMP + L-aspartate + GTP = N(6)-(1,2-dicarboxyethyl)-AMP + GDP + phosphate + 2 H(+). It participates in purine metabolism; AMP biosynthesis via de novo pathway; AMP from IMP: step 1/2. Its function is as follows. Plays an important role in the de novo pathway and in the salvage pathway of purine nucleotide biosynthesis. Catalyzes the first committed step in the biosynthesis of AMP from IMP. The chain is Adenylosuccinate synthetase from Saccharomyces cerevisiae (strain AWRI1631) (Baker's yeast).